The sequence spans 173 residues: Lens fiber membrane intrinsic protein (173 aa).

The Cytoplasmic segment spans residues Met-1–Ser-3. The helical transmembrane segment at Phe-4–Ala-24 threads the bilayer. The Extracellular portion of the chain corresponds to Thr-25–Ala-66. C-linked (Man) tryptophan glycans are attached at residues Trp-43 and Trp-61. N-linked (GlcNAc...) asparagine glycosylation is present at Asn-62. A helical transmembrane segment spans residues Phe-67–Ala-87. Over Gln-88–Pro-98 the chain is Cytoplasmic. The chain crosses the membrane as a helical span at residues Phe-99–Tyr-119. Topologically, residues Thr-120–Tyr-140 are extracellular. The chain crosses the membrane as a helical span at residues Ile-141 to Tyr-161. The Cytoplasmic portion of the chain corresponds to Arg-162–Arg-173. A Phosphothreonine modification is found at Thr-171.

It belongs to the PMP-22/EMP/MP20 family. In terms of assembly, seems to be associated with itself or another lens membrane component via disulfide bonds.

Its subcellular location is the membrane. Functionally, present in the thicker 16-17 nm junctions of mammalian lens fiber cells, where it may contribute to cell junctional organization. Acts as a receptor for calmodulin. May play an important role in both lens development and cataractogenesis. The polypeptide is Lens fiber membrane intrinsic protein (Lim2) (Mus musculus (Mouse)).